We begin with the raw amino-acid sequence, 245 residues long: MNNYKLTIQYDGARFKGWQRLGNNDNTIQGKIESVISEMVGKETEIIGCSRTDAGVHALNQVANFQSDEKLVEHKVKKYLNQYLPNDISITNVEEVHNRFHARYNSKVKTYLYKIWNEEHTNPFMRKYSMHVNKKLNVKSMKEAAKHLVGSHDFTAFSNAKSKKKSMVREVYSLEVMEEAGFVQIRVSGNGFLHNMVRKIVGALIEVGLGQLAAEAIPQILEAKQRNQINCLAEASGLYLENVEF.

The active-site Nucleophile is the D53. Y111 serves as a coordination point for substrate.

This sequence belongs to the tRNA pseudouridine synthase TruA family. As to quaternary structure, homodimer.

The enzyme catalyses uridine(38/39/40) in tRNA = pseudouridine(38/39/40) in tRNA. Formation of pseudouridine at positions 38, 39 and 40 in the anticodon stem and loop of transfer RNAs. This Bacillus thuringiensis subsp. konkukian (strain 97-27) protein is tRNA pseudouridine synthase A 2.